Reading from the N-terminus, the 396-residue chain is uncharacterized protein (396 aa).

This sequence belongs to the mycobacterial PPE family.

This is an uncharacterized protein from Mycobacterium tuberculosis (strain ATCC 25618 / H37Rv).